Reading from the N-terminus, the 200-residue chain is uncharacterized protein (200 aa).

The first 24 residues, 1–24 (MAIDKLPLLLFLSILLCLNRPVLS), serve as a signal peptide directing secretion. N-linked (GlcNAc...) asparagine glycans are attached at residues Asn44, Asn72, Asn99, Asn124, and Asn135. The GPI-anchor amidated serine moiety is linked to residue Ser174. A propeptide spans 175-200 (NGFTFGIGLVSYLVIFMYSSFCFFLF) (removed in mature form).

Belongs to the UPF0277 family.

The protein localises to the cell membrane. This is an uncharacterized protein from Arabidopsis thaliana (Mouse-ear cress).